An 864-amino-acid chain; its full sequence is Mitochondrial 15S rRNA processing factor CCM1 (864 aa).

The N-terminal 76 residues, 1–76, are a transit peptide targeting the mitochondrion; it reads MYMARCGPKN…REFSNTLKER (76 aa). PPR repeat units follow at residues 319 to 353 and 356 to 390; these read NKQNLTTVIQFYSRKEMTKQAWNTFDTMKFLSTKH and DICTYNTMLRICEKERNFPKALDLFQEIQDHNIKP.

The protein belongs to the CCM1 family. As to quaternary structure, binds to mitochondrial small subunit 15S rRNA.

The protein localises to the mitochondrion. Functionally, regulates mitochondrial small subunit maturation by controlling 15S rRNA 5'-end processing. Localizes to the 5' precursor of the 15S rRNA in a position that is subsequently occupied by mS47 in the mature yeast mtSSU. Uses structure and sequence-specific RNA recognition, binding to a single-stranded region of the precursor and specifically recognizing bases -6 to -1. The exchange of Ccm1 for mS47 is coupled to the irreversible removal of precursor rRNA that is accompanied by conformational changes of the mitoribosomal proteins uS5m and mS26. These conformational changes signal completion of 5'-end rRNA processing through protection of the mature 5'-end of the 15S rRNA and stabilization of mS47. The removal of the 5' precursor together with the dissociation of Ccm1 may be catalyzed by the 5'-3' exoribonuclease Pet127. Involved in the specific removal of group I introns in mitochondrial encoded transcripts. The protein is Mitochondrial 15S rRNA processing factor CCM1 (CCM1) of Saccharomyces cerevisiae (strain YJM789) (Baker's yeast).